A 173-amino-acid chain; its full sequence is Plasmolipin (173 aa).

Residues 1–34 are Cytoplasmic-facing; it reads MADFPGKVSTQTSSQEPQRSFAISSSVDMGFIKS. The region spanning 31–160 is the MARVEL domain; it reads FIKSIPGILL…SSYFAYLGWR (130 aa). A helical membrane pass occupies residues 35–55; it reads IPGILLIAEIVVGLLVWTLIA. The Extracellular portion of the chain corresponds to 56-67; sequence STPHYLIPALGW. Residues 68–88 form a helical membrane-spanning segment; the sequence is VLFVSITLWLLSIALLVILLL. Over 89–98 the chain is Cytoplasmic; it reads SLHQRLPSVP. A helical transmembrane segment spans residues 99–119; sequence WPLVLLVFYSVAALLYLTAFL. Residues 120–138 lie on the Extracellular side of the membrane; it reads ANAATVPGGYYQGHLGASA. A helical transmembrane segment spans residues 139–159; sequence FFGIVETLLYTASSYFAYLGW. Residues 160–173 lie on the Cytoplasmic side of the membrane; that stretch reads RGEGQNAAGSTVPV.

This sequence belongs to the MAL family. In terms of assembly, forms oligomers. Expressed in the posterior midgut.

Its subcellular location is the cell membrane. It localises to the myelin membrane. The protein localises to the apical cell membrane. It is found in the recycling endosome membrane. The protein resides in the vesicle. In terms of biological role, main component of the myelin sheath that plays an important role in myelin membrane biogenesis and myelination. Plays an essential function in apical endocytosis. Plays an important role by activating the Notch signaling pathway, which is essential for cell differentiation and results in correct patterning of the intestinal epithelium, particularly of the posterior gut absorptive cells. This is Plasmolipin (pllp) from Danio rerio (Zebrafish).